Here is a 317-residue protein sequence, read N- to C-terminus: Acetyl-coenzyme A carboxylase carboxyl transferase subunit alpha (317 aa).

Residues 39 to 293 enclose the CoA carboxyltransferase C-terminal domain; sequence RLKKKSISLT…KTSLAQGVAE (255 aa).

The protein belongs to the AccA family. In terms of assembly, acetyl-CoA carboxylase is a heterohexamer composed of biotin carboxyl carrier protein (AccB), biotin carboxylase (AccC) and two subunits each of ACCase subunit alpha (AccA) and ACCase subunit beta (AccD).

It localises to the cytoplasm. The catalysed reaction is N(6)-carboxybiotinyl-L-lysyl-[protein] + acetyl-CoA = N(6)-biotinyl-L-lysyl-[protein] + malonyl-CoA. It functions in the pathway lipid metabolism; malonyl-CoA biosynthesis; malonyl-CoA from acetyl-CoA: step 1/1. Component of the acetyl coenzyme A carboxylase (ACC) complex. First, biotin carboxylase catalyzes the carboxylation of biotin on its carrier protein (BCCP) and then the CO(2) group is transferred by the carboxyltransferase to acetyl-CoA to form malonyl-CoA. This is Acetyl-coenzyme A carboxylase carboxyl transferase subunit alpha from Marinobacter nauticus (strain ATCC 700491 / DSM 11845 / VT8) (Marinobacter aquaeolei).